Consider the following 581-residue polypeptide: Terpene synthase 2, chloroplastic (581 aa).

The transit peptide at 1–34 (MYSLPGATMSAAPASIISSSSFVEPLLLAAASPA) directs the protein to the chloroplast. Positions 299, 336, 340, and 480 each coordinate substrate. Asp336 and Asp340 together coordinate Mg(2+). The DDXXD motif signature appears at 336 to 340 (DDIFD). Asp483, Ser487, and Glu491 together coordinate Mg(2+).

It belongs to the terpene synthase family. Monomer. It depends on Mg(2+) as a cofactor.

The protein localises to the plastid. Its subcellular location is the chloroplast. The enzyme catalyses (2E,6E)-farnesyl diphosphate + H2O = (3S,6E)-nerolidol + diphosphate. It carries out the reaction (2E,6E,10E)-geranylgeranyl diphosphate + H2O = (6E,10E)-geranyllinalool + diphosphate. It catalyses the reaction (2E)-geranyl diphosphate + H2O = (S)-linalool + diphosphate. It participates in secondary metabolite biosynthesis; terpenoid biosynthesis. Involved in sesquiterpene (C15), diterpene (C20) and monoterpene (C10) biosynthesis. Has sesquiterpene synthase activity, converting farnesyl diphosphate to nerolidol, the precursor of the volatile C11-homoterpene (E)-3,8-dimethyl-1,4,7-nonatriene (DMNT). Has diterpene synthase activity, converting geranylgeranyl diphosphate to (E,E)-geranyllinalool, the precursor of the volatile C16-homoterpene (E,E)-4,8,12-trimethyltrideca 1,3,7,11-tetraene (TMTT). Has monoterpene synthase activity, converting geranyl diphosphate into linalool. Forms only the S-isomers of the three tertiary terpene alcohols. This chain is Terpene synthase 2, chloroplastic, found in Zea mays (Maize).